The following is a 1088-amino-acid chain: RNA-directed RNA polymerase (1088 aa).

Residues 501–687 enclose the RdRp catalytic domain; it reads LSYGDVTRFL…AKRYIAGGKI (187 aa).

This sequence belongs to the reoviridae RNA-directed RNA polymerase family. Interacts with VP3 (Potential). Interacts with VP2; this interaction activates VP1. Interacts with NSP5; this interaction is probably necessary for the formation of functional virus factories. Interacts with NSP2; this interaction is weak. Requires Mg(2+) as cofactor.

The protein localises to the virion. It carries out the reaction RNA(n) + a ribonucleoside 5'-triphosphate = RNA(n+1) + diphosphate. Its function is as follows. RNA-directed RNA polymerase that is involved in both transcription and genome replication. Together with VP3 capping enzyme, forms an enzyme complex positioned near the channels situated at each of the five-fold vertices of the core. Following infection, the outermost layer of the virus is lost, leaving a double-layered particle (DLP) made up of the core and VP6 shell. VP1 then catalyzes the transcription of fully conservative plus-strand genomic RNAs that are extruded through the DLP's channels into the cytoplasm where they function as mRNAs for translation of viral proteins. One copy of each of the viral (+)RNAs is also recruited during core assembly, together with newly synthesized polymerase complexes and VP2. The polymerase of these novo-formed particles catalyzes the synthesis of complementary minus-strands leading to dsRNA formation. To do so, the polymerase specifically recognizes and binds 4 bases 5'-UGUG-3' in the conserved 3'-sequence of plus-strand RNA templates. VP2 presumably activates the autoinhibited VP1-RNA complex to coordinate packaging and genome replication. Once dsRNA synthesis is complete, the polymerase switches to the transcriptional mode, thus providing secondary transcription. In Chlorocebus pygerythrus (Vervet monkey), this protein is RNA-directed RNA polymerase.